A 201-amino-acid polypeptide reads, in one-letter code: Adenylyl-sulfate kinase (201 aa).

35 to 42 (GLSGSGKS) lines the ATP pocket. Catalysis depends on S109, which acts as the Phosphoserine intermediate.

It belongs to the APS kinase family.

It catalyses the reaction adenosine 5'-phosphosulfate + ATP = 3'-phosphoadenylyl sulfate + ADP + H(+). It functions in the pathway sulfur metabolism; hydrogen sulfide biosynthesis; sulfite from sulfate: step 2/3. Its function is as follows. Catalyzes the synthesis of activated sulfate. The polypeptide is Adenylyl-sulfate kinase (Shigella flexneri).